We begin with the raw amino-acid sequence, 366 residues long: Probable cinnamyl alcohol dehydrogenase 3 (366 aa).

Cys-53 serves as a coordination point for Zn(2+). Ser-55 contributes to the NADP(+) binding site. Zn(2+)-binding residues include His-75, Glu-76, Cys-106, Cys-109, Cys-112, Cys-120, and Cys-169. NADP(+) contacts are provided by residues Thr-173, 194-199 (GLGGLG), 217-222 (SSSPGK), Thr-257, Gly-281, and 304-306 (SNI).

Belongs to the zinc-containing alcohol dehydrogenase family. As to quaternary structure, homodimer. Zn(2+) serves as cofactor.

It catalyses the reaction (E)-cinnamyl alcohol + NADP(+) = (E)-cinnamaldehyde + NADPH + H(+). The catalysed reaction is (E)-coniferol + NADP(+) = (E)-coniferaldehyde + NADPH + H(+). The enzyme catalyses (E)-sinapyl alcohol + NADP(+) = (E)-sinapaldehyde + NADPH + H(+). It carries out the reaction (E)-4-coumaroyl alcohol + NADP(+) = (E)-4-coumaraldehyde + NADPH + H(+). It catalyses the reaction (E)-caffeyl alcohol + NADP(+) = (E)-caffeyl aldehyde + NADPH + H(+). The protein operates within aromatic compound metabolism; phenylpropanoid biosynthesis. Its function is as follows. Involved in lignin biosynthesis. Catalyzes the final step specific for the production of lignin monomers. Catalyzes the NADPH-dependent reduction of coniferaldehyde, 5-hydroxyconiferaldehyde, sinapaldehyde, 4-coumaraldehyde and caffeyl aldehyde to their respective alcohols. This chain is Probable cinnamyl alcohol dehydrogenase 3, found in Oryza sativa subsp. japonica (Rice).